A 375-amino-acid polypeptide reads, in one-letter code: MRERGLGEEEIFAELCEARSRDVPYGRVLSSMCTNPHPIAVKAHQEFVNTNLGDPKLFPGTADIEHRCIGLIGDLLHLPAATGYISTGGTESNIQALRTAIQMKHTDRRRANIVVPESAHYSFEKASQMLGIAIRRAPLDDLLRADPSEMAALIDKNTIALVAVAGTTEFGQIDPIEEIGRLAQEHDLYLHVDAAFGGFVIPFMDRPAKFDFEIPGVQSITIDPHKMGLSTIPSGGLLYRSESLMKVLEINAQYLTSMVQTSLAGTRSGASAASAYAVLQYLGRAGYREIVATCMENTRILREQLEDMGMEPIIEPVLNIVTARAKDPVGLRKKLAEKNWYVSTTVHPCALRMVVMPHVTADVIEAFTADLKKVI.

The residue at position 226 (Lys-226) is an N6-(pyridoxal phosphate)lysine.

It belongs to the group II decarboxylase family. MfnA subfamily. Pyridoxal 5'-phosphate is required as a cofactor.

It catalyses the reaction L-tyrosine + H(+) = tyramine + CO2. The enzyme catalyses L-aspartate + H(+) = beta-alanine + CO2. It participates in cofactor biosynthesis; methanofuran biosynthesis. Its pathway is cofactor biosynthesis; coenzyme A biosynthesis. Functionally, catalyzes the decarboxylation of L-tyrosine to produce tyramine for methanofuran biosynthesis. Can also catalyze the decarboxylation of L-aspartate to produce beta-alanine for coenzyme A (CoA) biosynthesis. This Methanocella arvoryzae (strain DSM 22066 / NBRC 105507 / MRE50) protein is Probable L-tyrosine/L-aspartate decarboxylase.